A 142-amino-acid chain; its full sequence is Large ribosomal subunit protein uL16 (142 aa).

The protein belongs to the universal ribosomal protein uL16 family. As to quaternary structure, part of the 50S ribosomal subunit.

In terms of biological role, binds 23S rRNA and is also seen to make contacts with the A and possibly P site tRNAs. In Trichormus variabilis (strain ATCC 29413 / PCC 7937) (Anabaena variabilis), this protein is Large ribosomal subunit protein uL16.